The chain runs to 812 residues: MTTTPTAMPVSPSHDVIIAAAQRAARAIPPLWPLASSVAVNPFLGQGSEPLEMAGARLRRASGIAITMPRSWYAERLQSGQIAEQDLQAALQNAPAALRPPNLPALKQAVQAARPAPQALPTVAELARDADAVDWPGIVNERIGHWAAGYFDQGQALWAVGQSGGAYSTWRIIATHDLTPEIAGLAGFARYVAEAPANAEDAIVDCVARLGLSQDALDGYFHRLLTTLGGWGQLARYRLWQAELSGATDACVTDLLAVRLLWEAALLGNGGCTLVPGWQRAVAAYAEPVAATSDDVIDSILQEAAERAAQRKLSAVLAAPSPAQVASGRVKLQMAFCIDVRSEVFRRALESLDSGIQTLGFAGFFGLGIGHRRFASDVVEARLPVLLTPGVTTCAGDATSSAAASDLSARIAARAKRAWGRFKLAAISSFAFVEATGPIYVAKLLRDGLALARPHAPDEPAPRPADGLDLETRLTMATRILKAMSFTGGFARLVVLAGHGAKVVNNPHASALHCGACGGYSGEVNARLLASLLNDSQVRAGLAARGIVIPADTLFLAALHDTTTDAVTLYTADHPSPGHAEDLAQARQWLGAAGALARGERAVRLPRAHRSQDIAHRARDWAEIRPEWALAGCQAFIAAPRSRTAGRDLAGRAFLHDYDWRYDDGFGVLELILTAPVVVASWISLQYYGSTVAPESLGAGNKLLHNVTGGIGVVEGNGGILRTGLPWQSVHDGQRLTHEPLRLSVLIEAPPEAIATILERHPQVRALFDNRWLHLFALDDEGRMAHRYAGDLRWEQNASGARSCDHSVPMLA.

The Zn(2+) site is built by Cys337, Asp339, His499, and Cys514.

The protein belongs to the inorganic carbon transporter (TC 9.A.2) DabA family. Forms a complex with DabB. Requires Zn(2+) as cofactor.

The protein localises to the cell inner membrane. Its function is as follows. Part of an energy-coupled inorganic carbon pump. The chain is Probable inorganic carbon transporter subunit DabA from Xanthomonas euvesicatoria pv. vesicatoria (strain 85-10) (Xanthomonas campestris pv. vesicatoria).